Here is a 204-residue protein sequence, read N- to C-terminus: Leucyl/phenylalanyl-tRNA--protein transferase (204 aa).

The protein belongs to the L/F-transferase family.

It is found in the cytoplasm. The catalysed reaction is N-terminal L-lysyl-[protein] + L-leucyl-tRNA(Leu) = N-terminal L-leucyl-L-lysyl-[protein] + tRNA(Leu) + H(+). It carries out the reaction N-terminal L-arginyl-[protein] + L-leucyl-tRNA(Leu) = N-terminal L-leucyl-L-arginyl-[protein] + tRNA(Leu) + H(+). It catalyses the reaction L-phenylalanyl-tRNA(Phe) + an N-terminal L-alpha-aminoacyl-[protein] = an N-terminal L-phenylalanyl-L-alpha-aminoacyl-[protein] + tRNA(Phe). In terms of biological role, functions in the N-end rule pathway of protein degradation where it conjugates Leu, Phe and, less efficiently, Met from aminoacyl-tRNAs to the N-termini of proteins containing an N-terminal arginine or lysine. The sequence is that of Leucyl/phenylalanyl-tRNA--protein transferase from Brucella melitensis biotype 2 (strain ATCC 23457).